The primary structure comprises 83 residues: Sec-independent protein translocase protein TatA (83 aa).

A helical transmembrane segment spans residues M1–G21. The disordered stretch occupies residues K44–S83. Residues Q63–K72 show a composition bias toward polar residues. Basic and acidic residues predominate over residues T73–S83.

This sequence belongs to the TatA/E family. The Tat system comprises two distinct complexes: a TatABC complex, containing multiple copies of TatA, TatB and TatC subunits, and a separate TatA complex, containing only TatA subunits. Substrates initially bind to the TatABC complex, which probably triggers association of the separate TatA complex to form the active translocon.

Its subcellular location is the cell inner membrane. Functionally, part of the twin-arginine translocation (Tat) system that transports large folded proteins containing a characteristic twin-arginine motif in their signal peptide across membranes. TatA could form the protein-conducting channel of the Tat system. The protein is Sec-independent protein translocase protein TatA of Polaromonas sp. (strain JS666 / ATCC BAA-500).